Consider the following 280-residue polypeptide: MNHYLNAFLRSIIEAVTEFLPVSSTGHLFLFSSFFPFSGESLEFDDLFDIFIQSGAILSVLFLYREKFGSQMLSSFQYLTKRNSDSQGFYFLVQIVIGAFPILVVGFIAKKFLDTIKARPDLLDILASAWIFGGVLILIAEWFFQKRQGTEEKKTVGFRDAILIGIFQCVALIPGVSRSAATIVTARFLGKDTKSSAEFSFFLAVPVLLAAGIYKLIKHRSILNEVTIPILAFGFLISFLLCTLVIRLFLRYLQKHSFGVFGIYRILLGVGVLVFTKFIR.

8 helical membrane-spanning segments follow: residues 19 to 39 (FLPV…PFSG), 44 to 64 (FDDL…LFLY), 89 to 109 (FYFL…GFIA), 125 to 145 (ILAS…WFFQ), 156 to 176 (VGFR…IPGV), 197 to 217 (AEFS…YKLI), 226 to 246 (VTIP…TLVI), and 259 to 279 (GVFG…TKFI).

This sequence belongs to the UppP family.

The protein localises to the cell inner membrane. The enzyme catalyses di-trans,octa-cis-undecaprenyl diphosphate + H2O = di-trans,octa-cis-undecaprenyl phosphate + phosphate + H(+). Its function is as follows. Catalyzes the dephosphorylation of undecaprenyl diphosphate (UPP). Confers resistance to bacitracin. The chain is Undecaprenyl-diphosphatase from Leptospira borgpetersenii serovar Hardjo-bovis (strain L550).